Reading from the N-terminus, the 413-residue chain is Histidine--tRNA ligase (413 aa).

This sequence belongs to the class-II aminoacyl-tRNA synthetase family. In terms of assembly, homodimer.

The protein resides in the cytoplasm. The enzyme catalyses tRNA(His) + L-histidine + ATP = L-histidyl-tRNA(His) + AMP + diphosphate + H(+). This is Histidine--tRNA ligase from Geobacter metallireducens (strain ATCC 53774 / DSM 7210 / GS-15).